Reading from the N-terminus, the 97-residue chain is Putative septation protein SpoVG (97 aa).

It belongs to the SpoVG family.

Essential for sporulation. Interferes with or is a negative regulator of the pathway leading to asymmetric septation. This Bacillus velezensis (strain DSM 23117 / BGSC 10A6 / LMG 26770 / FZB42) (Bacillus amyloliquefaciens subsp. plantarum) protein is Putative septation protein SpoVG.